Consider the following 459-residue polypeptide: Mitochondrial distribution and morphology protein 34 (459 aa).

Residues 1–190 form the SMP-LTD domain; that stretch reads MSFRFNEAVF…LPSLIFNTSQ (190 aa). The segment covering 338 to 347 has biased composition (basic and acidic residues); the sequence is RSNSNDDNAK. Positions 338–375 are disordered; that stretch reads RSNSNDDNAKPRRRKIKCKKTRTPSNLQSQGEQAVDDS. Residues 348–359 are compositionally biased toward basic residues; sequence PRRRKIKCKKTR.

It belongs to the MDM34 family. As to quaternary structure, component of the ER-mitochondria encounter structure (ERMES) or MDM complex, composed of MMM1, MDM10, MDM12 and MDM34. Ubiquitinated by a SCF (SKP1-CUL1-F-box protein) E3 ubiquitin-protein ligase complex containing the F-box protein MDM30. Ubiquitination is important for mitochondrial integrity.

It localises to the mitochondrion outer membrane. Component of the ERMES/MDM complex, which serves as a molecular tether to connect the endoplasmic reticulum (ER) and mitochondria. Components of this complex are involved in the control of mitochondrial shape and protein biogenesis, and function in nonvesicular lipid trafficking between the ER and mitochondria. MDM34 is required for the interaction of the ER-resident membrane protein MMM1 and the outer mitochondrial membrane-resident beta-barrel protein MDM10. The polypeptide is Mitochondrial distribution and morphology protein 34 (Saccharomyces cerevisiae (strain RM11-1a) (Baker's yeast)).